We begin with the raw amino-acid sequence, 227 residues long: Flagellar L-ring protein (227 aa).

Residues 1 to 15 (MRTWAVLPILLMLVG) form the signal peptide. Cys-16 is lipidated: N-palmitoyl cysteine. Cys-16 carries S-diacylglycerol cysteine lipidation.

It belongs to the FlgH family. As to quaternary structure, the basal body constitutes a major portion of the flagellar organelle and consists of four rings (L,P,S, and M) mounted on a central rod.

Its subcellular location is the cell outer membrane. The protein resides in the bacterial flagellum basal body. Its function is as follows. Assembles around the rod to form the L-ring and probably protects the motor/basal body from shearing forces during rotation. In Syntrophotalea carbinolica (strain DSM 2380 / NBRC 103641 / GraBd1) (Pelobacter carbinolicus), this protein is Flagellar L-ring protein.